The following is a 170-amino-acid chain: ATP synthase subunit b (170 aa).

The helical transmembrane segment at 11-31 (AFTFGDAFFTLFAFAILLVLI) threads the bilayer.

The protein belongs to the ATPase B chain family. F-type ATPases have 2 components, F(1) - the catalytic core - and F(0) - the membrane proton channel. F(1) has five subunits: alpha(3), beta(3), gamma(1), delta(1), epsilon(1). F(0) has three main subunits: a(1), b(2) and c(10-14). The alpha and beta chains form an alternating ring which encloses part of the gamma chain. F(1) is attached to F(0) by a central stalk formed by the gamma and epsilon chains, while a peripheral stalk is formed by the delta and b chains.

It is found in the cell membrane. Functionally, f(1)F(0) ATP synthase produces ATP from ADP in the presence of a proton or sodium gradient. F-type ATPases consist of two structural domains, F(1) containing the extramembraneous catalytic core and F(0) containing the membrane proton channel, linked together by a central stalk and a peripheral stalk. During catalysis, ATP synthesis in the catalytic domain of F(1) is coupled via a rotary mechanism of the central stalk subunits to proton translocation. In terms of biological role, component of the F(0) channel, it forms part of the peripheral stalk, linking F(1) to F(0). The sequence is that of ATP synthase subunit b from Listeria welshimeri serovar 6b (strain ATCC 35897 / DSM 20650 / CCUG 15529 / CIP 8149 / NCTC 11857 / SLCC 5334 / V8).